Reading from the N-terminus, the 284-residue chain is Bifunctional protein FolD (284 aa).

NADP(+) contacts are provided by residues 165-167 (GRS) and S190.

Belongs to the tetrahydrofolate dehydrogenase/cyclohydrolase family. In terms of assembly, homodimer.

The enzyme catalyses (6R)-5,10-methylene-5,6,7,8-tetrahydrofolate + NADP(+) = (6R)-5,10-methenyltetrahydrofolate + NADPH. It catalyses the reaction (6R)-5,10-methenyltetrahydrofolate + H2O = (6R)-10-formyltetrahydrofolate + H(+). It participates in one-carbon metabolism; tetrahydrofolate interconversion. Its function is as follows. Catalyzes the oxidation of 5,10-methylenetetrahydrofolate to 5,10-methenyltetrahydrofolate and then the hydrolysis of 5,10-methenyltetrahydrofolate to 10-formyltetrahydrofolate. The polypeptide is Bifunctional protein FolD (Streptococcus gordonii (strain Challis / ATCC 35105 / BCRC 15272 / CH1 / DL1 / V288)).